Consider the following 418-residue polypeptide: Sonic hedgehog protein (418 aa).

An N-terminal signal peptide occupies residues 1–23 (MRLLTRVLLVSLLTLSLVVSGLA). C24 is lipidated: N-palmitoyl cysteine. Positions 32-38 (RRRHPKK) match the Cardin-Weintraub motif. Positions 89, 90, 95, 125, 126, 129, and 131 each coordinate Ca(2+). 3 residues coordinate Zn(2+): H140, D147, and H182. G197 carries the Cholesterol glycine ester lipid modification.

It belongs to the hedgehog family. Interacts with HHATL/GUP1 which negatively regulates HHAT-mediated palmitoylation of the SHH N-terminus. Interacts with BOC and CDON. Interacts with HHIP. Interacts with DISP1 via its cholesterol anchor. Interacts with SCUBE2. In terms of assembly, multimer. The C-terminal domain displays an autoproteolysis activity and a cholesterol transferase activity. Both activities result in the cleavage of the full-length protein and covalent attachment of a cholesterol moiety to the C-terminal of the newly generated N-terminal fragment (ShhN). Cholesterylation is required for the sonic hedgehog protein N-product targeting to lipid rafts and multimerization. ShhN is the active species in both local and long-range signaling, whereas the C-product (ShhC) is degraded in the reticulum endoplasmic. Post-translationally, N-palmitoylation by HHAT of ShhN is required for sonic hedgehog protein N-product multimerization and full activity. It is a prerequisite for the membrane-proximal positioning and the subsequent shedding of this N-terminal peptide. In terms of processing, the lipidated N- and C-terminal peptides of ShhNp can be cleaved (shedding). The N-terminal palmitoylated peptide is cleaved at the Cardin-Weintraub (CW) motif site. The cleavage reduced the interactions with heparan sulfate. The cleavage is enhanced by SCUBE2. In terms of tissue distribution, expressed in the ventral midline of the neural tube and brain. Also found in the notochord and in developing fin bud. In the developing brain, expression occurs in domains that include a discrete region in the floor of the diencephalon.

It is found in the endoplasmic reticulum membrane. Its subcellular location is the golgi apparatus membrane. The protein resides in the cell membrane. It catalyses the reaction glycyl-L-cysteinyl-[protein] + cholesterol + H(+) = [protein]-C-terminal glycyl cholesterol ester + N-terminal L-cysteinyl-[protein]. Functionally, the C-terminal part of the sonic hedgehog protein precursor displays an autoproteolysis and a cholesterol transferase activity. Both activities result in the cleavage of the full-length protein into two parts (ShhN and ShhC) followed by the covalent attachment of a cholesterol moiety to the C-terminal of the newly generated ShhN. Both activities occur in the endoplasmic reticulum. Once cleaved, ShhC is degraded in the endoplasmic reticulum. Its function is as follows. The dually lipidated sonic hedgehog protein N-product (ShhNp) is a morphogen which is essential for a variety of patterning events during development. Involved in dorso-ventral patterning of the brain and in early patterning of the developing eyes. Binds to the patched (PTCH1) receptor, which functions in association with smoothened (SMO), to activate the transcription of target genes. In the absence of SHH, PTCH1 represses the constitutive signaling activity of SMO. The protein is Sonic hedgehog protein (shha) of Danio rerio (Zebrafish).